The following is a 378-amino-acid chain: Lipid-A-disaccharide synthase (378 aa).

It belongs to the LpxB family.

The catalysed reaction is a lipid X + a UDP-2-N,3-O-bis[(3R)-3-hydroxyacyl]-alpha-D-glucosamine = a lipid A disaccharide + UDP + H(+). It functions in the pathway bacterial outer membrane biogenesis; LPS lipid A biosynthesis. In terms of biological role, condensation of UDP-2,3-diacylglucosamine and 2,3-diacylglucosamine-1-phosphate to form lipid A disaccharide, a precursor of lipid A, a phosphorylated glycolipid that anchors the lipopolysaccharide to the outer membrane of the cell. In Pseudomonas paraeruginosa (strain DSM 24068 / PA7) (Pseudomonas aeruginosa (strain PA7)), this protein is Lipid-A-disaccharide synthase.